Here is a 258-residue protein sequence, read N- to C-terminus: Ubiquinone/menaquinone biosynthesis C-methyltransferase UbiE (258 aa).

S-adenosyl-L-methionine is bound by residues Thr-81, Asp-102, and 130–131; that span reads NA.

The protein belongs to the class I-like SAM-binding methyltransferase superfamily. MenG/UbiE family.

The enzyme catalyses a 2-demethylmenaquinol + S-adenosyl-L-methionine = a menaquinol + S-adenosyl-L-homocysteine + H(+). It catalyses the reaction a 2-methoxy-6-(all-trans-polyprenyl)benzene-1,4-diol + S-adenosyl-L-methionine = a 5-methoxy-2-methyl-3-(all-trans-polyprenyl)benzene-1,4-diol + S-adenosyl-L-homocysteine + H(+). The protein operates within quinol/quinone metabolism; menaquinone biosynthesis; menaquinol from 1,4-dihydroxy-2-naphthoate: step 2/2. Its pathway is cofactor biosynthesis; ubiquinone biosynthesis. Functionally, methyltransferase required for the conversion of demethylmenaquinol (DMKH2) to menaquinol (MKH2) and the conversion of 2-polyprenyl-6-methoxy-1,4-benzoquinol (DDMQH2) to 2-polyprenyl-3-methyl-6-methoxy-1,4-benzoquinol (DMQH2). In Allorhizobium ampelinum (strain ATCC BAA-846 / DSM 112012 / S4) (Agrobacterium vitis (strain S4)), this protein is Ubiquinone/menaquinone biosynthesis C-methyltransferase UbiE.